We begin with the raw amino-acid sequence, 178 residues long: Protein GrpE (178 aa).

Basic and acidic residues-rich tracts occupy residues 1–19 (MAKH…KEEA) and 30–42 (SPEK…ANER). The segment at 1 to 42 (MAKHKQEEHPEDVEVKEEAVETAEQAESASPEKSELELANER) is disordered.

Belongs to the GrpE family. In terms of assembly, homodimer.

The protein localises to the cytoplasm. Participates actively in the response to hyperosmotic and heat shock by preventing the aggregation of stress-denatured proteins, in association with DnaK and GrpE. It is the nucleotide exchange factor for DnaK and may function as a thermosensor. Unfolded proteins bind initially to DnaJ; upon interaction with the DnaJ-bound protein, DnaK hydrolyzes its bound ATP, resulting in the formation of a stable complex. GrpE releases ADP from DnaK; ATP binding to DnaK triggers the release of the substrate protein, thus completing the reaction cycle. Several rounds of ATP-dependent interactions between DnaJ, DnaK and GrpE are required for fully efficient folding. In Streptococcus sanguinis (strain SK36), this protein is Protein GrpE.